The sequence spans 183 residues: Archaemetzincin (183 aa).

His132 lines the Zn(2+) pocket. The active-site Proton acceptor is Glu133. 6 residues coordinate Zn(2+): His136, His142, Cys143, Cys148, Cys167, and Cys170.

Belongs to the peptidase M54 family. As to quaternary structure, monomer. The cofactor is Zn(2+).

Functionally, probable zinc metalloprotease whose natural substrate is unknown. This Aeropyrum pernix (strain ATCC 700893 / DSM 11879 / JCM 9820 / NBRC 100138 / K1) protein is Archaemetzincin.